The chain runs to 305 residues: Glycine--tRNA ligase alpha subunit (305 aa).

Belongs to the class-II aminoacyl-tRNA synthetase family. Tetramer of two alpha and two beta subunits.

It localises to the cytoplasm. It carries out the reaction tRNA(Gly) + glycine + ATP = glycyl-tRNA(Gly) + AMP + diphosphate. This is Glycine--tRNA ligase alpha subunit from Streptococcus pyogenes serotype M12 (strain MGAS2096).